The chain runs to 385 residues: Ribosomal RNA large subunit methyltransferase G (385 aa).

The protein belongs to the methyltransferase superfamily. RlmG family.

It is found in the cytoplasm. The catalysed reaction is guanosine(1835) in 23S rRNA + S-adenosyl-L-methionine = N(2)-methylguanosine(1835) in 23S rRNA + S-adenosyl-L-homocysteine + H(+). Its function is as follows. Specifically methylates the guanine in position 1835 (m2G1835) of 23S rRNA. The sequence is that of Ribosomal RNA large subunit methyltransferase G from Vibrio campbellii (strain ATCC BAA-1116).